The chain runs to 185 residues: Ribosome-recycling factor (185 aa).

This sequence belongs to the RRF family.

It is found in the cytoplasm. Functionally, responsible for the release of ribosomes from messenger RNA at the termination of protein biosynthesis. May increase the efficiency of translation by recycling ribosomes from one round of translation to another. This chain is Ribosome-recycling factor, found in Histophilus somni (strain 2336) (Haemophilus somnus).